A 91-amino-acid chain; its full sequence is UPF0223 protein SAB0963 (91 aa).

The protein belongs to the UPF0223 family.

This Staphylococcus aureus (strain bovine RF122 / ET3-1) protein is UPF0223 protein SAB0963.